A 99-amino-acid polypeptide reads, in one-letter code: Small integral membrane protein 14 (99 aa).

Topologically, residues 1–49 (MAEGGFDPCECVCSHEHAMRRLINLLRQSQSYCTDTECLRELPGPSSDS) are lumenal. A helical membrane pass occupies residues 50–70 (GISITVILMAWMVIAMLLFLL). The Cytoplasmic segment spans residues 71 to 99 (RPPNLRGSSLPGKPSSPHSGQDPPAPPVD). A disordered region spans residues 77-99 (GSSLPGKPSSPHSGQDPPAPPVD).

Ubiquitously expressed.

Its subcellular location is the endoplasmic reticulum membrane. The protein is Small integral membrane protein 14 (Smim14) of Mus musculus (Mouse).